Consider the following 192-residue polypeptide: Potassium-transporting ATPase KdpC subunit (192 aa).

Residues 7 to 27 form a helical membrane-spanning segment; it reads PLIVIFAVLTAVTGLAYPAVM.

This sequence belongs to the KdpC family. The system is composed of three essential subunits: KdpA, KdpB and KdpC.

Its subcellular location is the cell inner membrane. Functionally, part of the high-affinity ATP-driven potassium transport (or Kdp) system, which catalyzes the hydrolysis of ATP coupled with the electrogenic transport of potassium into the cytoplasm. This subunit acts as a catalytic chaperone that increases the ATP-binding affinity of the ATP-hydrolyzing subunit KdpB by the formation of a transient KdpB/KdpC/ATP ternary complex. The polypeptide is Potassium-transporting ATPase KdpC subunit (Paraburkholderia phytofirmans (strain DSM 17436 / LMG 22146 / PsJN) (Burkholderia phytofirmans)).